The chain runs to 116 residues: MGELPPQVQNLVAQLQQLQQQLQAVITQRAQVEALLRDTEQALEELQKVDDETPVYKAVGNILVKEKKEDVIKELTEKKETYEIRIKTLQRQEEKLRERFAETQQKLQNLLSPQAG.

The protein belongs to the prefoldin subunit beta family. Heterohexamer of two alpha and four beta subunits.

The protein resides in the cytoplasm. In terms of biological role, molecular chaperone capable of stabilizing a range of proteins. Seems to fulfill an ATP-independent, HSP70-like function in archaeal de novo protein folding. In Archaeoglobus fulgidus (strain ATCC 49558 / DSM 4304 / JCM 9628 / NBRC 100126 / VC-16), this protein is Prefoldin subunit beta (pfdB).